The sequence spans 374 residues: Arrestin domain-containing protein 15 (374 aa).

The disordered stretch occupies residues 344 to 374; sequence HHLNRSKAKVSKTEQQQRKTRNIVEENPYFR.

Belongs to the arrestin family.

The protein is Arrestin domain-containing protein 15 (arrd-15) of Caenorhabditis elegans.